The chain runs to 860 residues: MTNTGPIVRRVFRYASVLDTICYKRGIHSSRALLSESRLNSVPPDRTRNIGIIAHIDAGKTTTTERMLFYSGKTRRIGNVDEGDTVTDYLPSERERGITIQSAAITIPWNKNKINIIDTPGHADFTFEVTRSLRVLDSCVTILDAVAGVEAQTEKVWKQAQALGIPKIAYVNKMDRDGAGFSRTVKEIIQKLQTRVVLCNIPYWETPVNDVPIFKGVLDVLNKKLLKWNSDSNANGTDISVTDLEKEMDKYPELYEMVSKSRESMVETLGEFDETIIDSFLENDEDYMKIPVAVLNSAIKRGTLANYVTPVFCGSSFRNIGVQPLMDAVVNFLPSPLETKVPDISSNAPKALAKMKGKNRKKKVTSEPTDVPLSMDPKHGLVINKNPNLTTALAFKVITHPTRGVMTFFRVYSGKLTSNTTIMNTRTGKKLNLRKLLLMHGDEPEVVPSISAGNIGVISGTDDDIVTGDTIVSHGPVNKPFNDLESSLKMLPIEIPPPLFNSSIEPLTAGDTRHLNSCIQILLREDPSLKVSVDEDLGQIILSGMGELHLEIIKERLVTDMKANARLRDVAVSYKETLGKPNYKSVTQSTGDNGCVSIEISMDSFEGLAEESSFADEDGAIVLEHENNIVILEPSATPEYMQTAIDERRWKSDHSLEDLQESLVHGCITALQLGGPVFGFALHSTVIRIKNWHFPVDSKDYNSSSLLDISRRAVTKNIKDLGESEKDLFSLLEPIMQTKVYINSDSLGEVVHDLTHRCQATITSIDDESENMDALNWANEESERVYVPPDYTMKNTNNLQVELRNKKVIVAETPLREMIGYLSRLRSITQGRGVFDMSYLGMKRVIKSRLASISNEFNFM.

One can recognise a tr-type G domain in the interval 45-337 (DRTRNIGIIA…AVVNFLPSPL (293 aa)). GTP-binding positions include 54-61 (AHIDAGKT), 118-122 (DTPGH), and 172-175 (NKMD).

This sequence belongs to the TRAFAC class translation factor GTPase superfamily. Classic translation factor GTPase family. EF-G/EF-2 subfamily.

The protein resides in the mitochondrion. Its function is as follows. Mitochondrial GTPase that mediates the disassembly of ribosomes from messenger RNA at the termination of mitochondrial protein biosynthesis. Not involved in the GTP-dependent ribosomal translocation step during translation elongation. The chain is Ribosome-releasing factor 2, mitochondrial from Debaryomyces hansenii (strain ATCC 36239 / CBS 767 / BCRC 21394 / JCM 1990 / NBRC 0083 / IGC 2968) (Yeast).